The following is a 370-amino-acid chain: 3-isopropylmalate dehydrogenase (370 aa).

77–90 (GAKWDGVPYEARPE) serves as a coordination point for NAD(+). Substrate contacts are provided by arginine 97, arginine 107, arginine 135, and aspartate 226. 3 residues coordinate Mg(2+): aspartate 226, aspartate 250, and aspartate 254. 290 to 302 (GSAPDIAGKGLAN) is a binding site for NAD(+).

This sequence belongs to the isocitrate and isopropylmalate dehydrogenases family. LeuB type 1 subfamily. As to quaternary structure, homodimer. Mg(2+) serves as cofactor. Requires Mn(2+) as cofactor.

It localises to the cytoplasm. The catalysed reaction is (2R,3S)-3-isopropylmalate + NAD(+) = 4-methyl-2-oxopentanoate + CO2 + NADH. It participates in amino-acid biosynthesis; L-leucine biosynthesis; L-leucine from 3-methyl-2-oxobutanoate: step 3/4. In terms of biological role, catalyzes the oxidation of 3-carboxy-2-hydroxy-4-methylpentanoate (3-isopropylmalate) to 3-carboxy-4-methyl-2-oxopentanoate. The product decarboxylates to 4-methyl-2 oxopentanoate. The chain is 3-isopropylmalate dehydrogenase from Rhodopseudomonas palustris (strain BisB18).